Consider the following 291-residue polypeptide: Phosphatidylserine decarboxylase proenzyme 2 (291 aa).

Active-site charge relay system; for autoendoproteolytic cleavage activity residues include D112 and S251. Catalysis depends on S251, which acts as the Schiff-base intermediate with substrate; via pyruvic acid; for decarboxylase activity. S251 is subject to Pyruvic acid (Ser); by autocatalysis.

The protein belongs to the phosphatidylserine decarboxylase family. PSD-B subfamily. Prokaryotic type II sub-subfamily. In terms of assembly, heterodimer of a large membrane-associated beta subunit and a small pyruvoyl-containing alpha subunit. Pyruvate serves as cofactor. In terms of processing, is synthesized initially as an inactive proenzyme. Formation of the active enzyme involves a self-maturation process in which the active site pyruvoyl group is generated from an internal serine residue via an autocatalytic post-translational modification. Two non-identical subunits are generated from the proenzyme in this reaction, and the pyruvate is formed at the N-terminus of the alpha chain, which is derived from the carboxyl end of the proenzyme. The autoendoproteolytic cleavage occurs by a canonical serine protease mechanism, in which the side chain hydroxyl group of the serine supplies its oxygen atom to form the C-terminus of the beta chain, while the remainder of the serine residue undergoes an oxidative deamination to produce ammonia and the pyruvoyl prosthetic group on the alpha chain. During this reaction, the Ser that is part of the protease active site of the proenzyme becomes the pyruvoyl prosthetic group, which constitutes an essential element of the active site of the mature decarboxylase.

The protein localises to the cell membrane. It catalyses the reaction a 1,2-diacyl-sn-glycero-3-phospho-L-serine + H(+) = a 1,2-diacyl-sn-glycero-3-phosphoethanolamine + CO2. The protein operates within phospholipid metabolism; phosphatidylethanolamine biosynthesis; phosphatidylethanolamine from CDP-diacylglycerol: step 2/2. Functionally, catalyzes the formation of phosphatidylethanolamine (PtdEtn) from phosphatidylserine (PtdSer). This is Phosphatidylserine decarboxylase proenzyme 2 from Clostridium acetobutylicum (strain ATCC 824 / DSM 792 / JCM 1419 / IAM 19013 / LMG 5710 / NBRC 13948 / NRRL B-527 / VKM B-1787 / 2291 / W).